Consider the following 233-residue polypeptide: Probable tetraheme cytochrome c-type (233 aa).

The N-terminal stretch at 1–28 is a signal peptide; the sequence is MTRLQKGSIGTLLTGALLGIVLVAVVFG. Positions 39, 42, 45, 67, 70, 71, 93, 131, 134, 135, 159, 162, 163, and 168 each coordinate heme. Residues 182 to 233 form a disordered region; sequence QGKLVLKPEDDGDDEEADEDEDEETEEADDSSDSESASSSDNSDNEDDNNDE. Composition is skewed to acidic residues over residues 191–214 and 224–233; these read DDGD…DSSD and SDNEDDNNDE.

This sequence belongs to the NapC/NirT/NrfH family. Post-translationally, binds 4 heme groups per subunit.

The protein resides in the periplasm. This is Probable tetraheme cytochrome c-type (cycX1) from Nitrosomonas europaea (strain ATCC 19718 / CIP 103999 / KCTC 2705 / NBRC 14298).